Consider the following 329-residue polypeptide: Vanillate O-demethylase oxygenase subunit (329 aa).

Residues 1–84 (MICNERMVIY…AQERHGFIWV (84 aa)) enclose the Rieske domain. [2Fe-2S] cluster is bound by residues C24, H26, C43, and H46.

It belongs to the bacterial ring-hydroxylating dioxygenase alpha subunit family. As to quaternary structure, this demethylase system consists of two proteins: an oxygenase and an oxygenase reductase. [2Fe-2S] cluster serves as cofactor. Fe cation is required as a cofactor.

The catalysed reaction is vanillate + NADH + O2 + H(+) = 3,4-dihydroxybenzoate + formaldehyde + NAD(+) + H2O. Its pathway is xenobiotic degradation; vanillyl-alcohol degradation. The polypeptide is Vanillate O-demethylase oxygenase subunit (vanA) (Pseudomonas sp. (strain ATCC 19151)).